We begin with the raw amino-acid sequence, 262 residues long: Probable carboxylesterase SOBER1-like (262 aa).

Active-site charge relay system residues include Ser-151, Asp-205, and His-237.

The protein belongs to the AB hydrolase superfamily. AB hydrolase 2 family.

Its function is as follows. Carboxylesterase. The protein is Probable carboxylesterase SOBER1-like of Arabidopsis thaliana (Mouse-ear cress).